The following is a 189-amino-acid chain: Transcription factor FapR (189 aa).

The protein belongs to the FapR family.

Transcriptional factor involved in regulation of membrane lipid biosynthesis by repressing genes involved in fatty acid and phospholipid metabolism. The chain is Transcription factor FapR from Exiguobacterium sp. (strain ATCC BAA-1283 / AT1b).